The primary structure comprises 151 residues: Methylated-DNA--protein-cysteine methyltransferase (151 aa).

Cysteine 119 serves as the catalytic Nucleophile; methyl group acceptor.

The protein belongs to the MGMT family.

The protein resides in the cytoplasm. It catalyses the reaction a 6-O-methyl-2'-deoxyguanosine in DNA + L-cysteinyl-[protein] = S-methyl-L-cysteinyl-[protein] + a 2'-deoxyguanosine in DNA. The catalysed reaction is a 4-O-methyl-thymidine in DNA + L-cysteinyl-[protein] = a thymidine in DNA + S-methyl-L-cysteinyl-[protein]. In terms of biological role, involved in the cellular defense against the biological effects of O6-methylguanine (O6-MeG) and O4-methylthymine (O4-MeT) in DNA. Repairs the methylated nucleobase in DNA by stoichiometrically transferring the methyl group to a cysteine residue in the enzyme. This is a suicide reaction: the enzyme is irreversibly inactivated. This Saccharolobus islandicus (strain Y.N.15.51 / Yellowstone #2) (Sulfolobus islandicus) protein is Methylated-DNA--protein-cysteine methyltransferase.